Consider the following 530-residue polypeptide: RNA-binding protein 39 (530 aa).

The tract at residues 1–146 (MADDIDIEAM…PVREPIDNLT (146 aa)) is disordered. Ala-2 carries the post-translational modification N-acetylalanine. The span at 14–32 (PYKKDENKLNSANGHEERS) shows a compositional bias: basic and acidic residues. Basic residues-rich tracts occupy residues 33–56 (KKRKKSKSRSRSHERKRSKSKERK) and 64–95 (KKSKSRERKRSRSKERRRSRSRSRDRRFRGRY). At Tyr-95 the chain carries Phosphotyrosine. Phosphoserine is present on residues Ser-97 and Ser-100. Lys-111 participates in a covalent cross-link: Glycyl lysine isopeptide (Lys-Gly) (interchain with G-Cter in SUMO2). Ser-117 bears the Phosphoserine mark. Lys-119 is covalently cross-linked (Glycyl lysine isopeptide (Lys-Gly) (interchain with G-Cter in SUMO2)). Residues 119–130 (KLSRRRSRSKSP) show a composition bias toward basic residues. 2 positions are modified to phosphoserine: Ser-121 and Ser-136. Residues 131–146 (FRKDKSPVREPIDNLT) are compositionally biased toward basic and acidic residues. The residue at position 146 (Thr-146) is a Phosphothreonine. An RRM 1 domain is found at 153 to 230 (RTVFCMQLAA…VPIIVQASQA (78 aa)). Lys-244 is covalently cross-linked (Glycyl lysine isopeptide (Lys-Gly) (interchain with G-Cter in SUMO2)). One can recognise an RRM 2 domain in the interval 250-328 (MRLYVGSLHF…RPMKVGHVTE (79 aa)). The activating domain stretch occupies residues 291–355 (KGYGFITFSD…RTGIDLGTTG (65 aa)). Residues 291-406 (KGYGFITFSD…IDLQTRLSQQ (116 aa)) are interaction with JUN. A phosphoserine mark is found at Ser-334, Ser-337, and Ser-341. An interaction with ESR1 and ESR2 region spans residues 355–406 (GRLQLMARLAEGTGLQIPPAAQQALQMSGSLAFGAVAEFSFVIDLQTRLSQQ). The interaction with NCOA6 stretch occupies residues 406–530 (QTEASALAAA…ATQLLVPSRR (125 aa)). The 64-residue stretch at 445-508 (EIKDDVIEEC…KMITAAYVPL (64 aa)) folds into the RRM 3 domain.

Belongs to the splicing factor SR family. As to quaternary structure, interacts with NCOA6 and JUN. Interacts with ESR1 and ESR2, in the presence of estradiol (E2). Interacts with RSRC1 (via Arg/Ser-rich domain). Interacts with SF3B1. Interacts with ZNF106 (via N-terminus).

The protein localises to the nucleus. In terms of biological role, RNA-binding protein that acts as a pre-mRNA splicing factor. Acts by promoting exon inclusion via regulation of exon cassette splicing. Also acts as a transcriptional coactivator for steroid nuclear receptors ESR1/ER-alpha and ESR2/ER-beta, and JUN/AP-1, independently of the pre-mRNA splicing factor activity. The chain is RNA-binding protein 39 (Rbm39) from Mus musculus (Mouse).